A 144-amino-acid chain; its full sequence is Neuritin-A (144 aa).

An N-terminal signal peptide occupies residues 1–27 (MGLKLSGRYIFLVLAVHLAYLLQAVKA). The GPI-anchor amidated serine moiety is linked to residue Ser-114. A propeptide spans 115–144 (AGAPGQRLLFPAFLPLLMVFLSTLFILVLQ) (removed in mature form).

This sequence belongs to the neuritin family. In terms of tissue distribution, expressed in sensory regions of the brain including the visual, auditory and olfactory systems. Within the retina, only expressed in the retinal ganglion cells. Concentrated in axon tracts including retinal axons.

Its subcellular location is the cell membrane. Modulates postsynaptic dendritic arbor elaboration and synaptic maturation. This is Neuritin-A (nrn1-a) from Xenopus laevis (African clawed frog).